The following is a 159-amino-acid chain: Neuroglobin-1 (159 aa).

Residues 3–151 enclose the Globin domain; that stretch reads KLTEKEKELI…VVAAMSRGWA (149 aa). Heme b contacts are provided by H66 and H98.

This sequence belongs to the globin family. In terms of assembly, monomer. Homodimers and homotetramers. Mainly monomeric but also detected as part of homodimers and homotetramers.

It is found in the cytoplasm. It localises to the cytosol. Its subcellular location is the mitochondrion matrix. It carries out the reaction Fe(III)-heme b-[protein] + nitric oxide + H2O = Fe(II)-heme b-[protein] + nitrite + 2 H(+). Functionally, monomeric globin with a bis-histidyl six-coordinate heme-iron atom through which it can bind dioxygen, carbon monoxide and nitric oxide. Could help transport oxygen and increase its availability to the metabolically active neuronal tissues, though its low quantity in tissues as well as its high affinity for dioxygen, which may limit its oxygen-releasing ability, argue against it. The ferrous/deoxygenated form exhibits a nitrite reductase activity and it could produce nitric oxide which in turn inhibits cellular respiration in response to hypoxia. In its ferrous/deoxygenated state, it may also exhibit GDI (Guanine nucleotide Dissociation Inhibitor) activity toward heterotrimeric G-alpha proteins, thereby regulating signal transduction to facilitate neuroprotective responses in the wake of hypoxia and associated oxidative stress. The polypeptide is Neuroglobin-1 (ngb1) (Oncorhynchus mykiss (Rainbow trout)).